Here is a 594-residue protein sequence, read N- to C-terminus: Probable ABC transporter-binding protein DR_1571 (594 aa).

Residues 1-18 form the signal peptide; that stretch reads MKKVMMLALALGASTSLA.

Belongs to the bacterial solute-binding protein 5 family.

In terms of biological role, probably part of a binding-protein-dependent transport system. This chain is Probable ABC transporter-binding protein DR_1571, found in Deinococcus radiodurans (strain ATCC 13939 / DSM 20539 / JCM 16871 / CCUG 27074 / LMG 4051 / NBRC 15346 / NCIMB 9279 / VKM B-1422 / R1).